Here is a 485-residue protein sequence, read N- to C-terminus: NADH-quinone oxidoreductase subunit N (485 aa).

Helical transmembrane passes span 8 to 28, 35 to 55, 71 to 91, 105 to 125, 127 to 147, 159 to 179, 203 to 223, 235 to 255, 271 to 291, 297 to 317, 326 to 346, 373 to 393, 408 to 430, and 455 to 475; these read LIALLPLLIVGLTVVVVMLSI, FLNATLSVIGLNAALVSLWFV, GFAMLYTGLVLLASLATCTFA, FYLLVLIAALGGILLANANHL, SLFLGIELISLPLFGLVGYAF, YTILSAAASSFLLFGMALVYA, LLAGFGLMIVGLGFKLSLVPF, PAPVSTFLATASKIAIFGVVM, VVLAIIAFASIIFGNLMALSQ, LLGYSSISHLGYLLVALIALQ, VGVYLAGYLFSSLGAFGVVSL, AAVMTVMMLSLAGIPMTLGFI, WWLVGAVVVGSAIGLYYYLRVAV, and IVVLISALLVLVLGVWPQPLI.

Belongs to the complex I subunit 2 family. In terms of assembly, NDH-1 is composed of 13 different subunits. Subunits NuoA, H, J, K, L, M, N constitute the membrane sector of the complex.

Its subcellular location is the cell inner membrane. It catalyses the reaction a quinone + NADH + 5 H(+)(in) = a quinol + NAD(+) + 4 H(+)(out). Functionally, NDH-1 shuttles electrons from NADH, via FMN and iron-sulfur (Fe-S) centers, to quinones in the respiratory chain. The immediate electron acceptor for the enzyme in this species is believed to be ubiquinone. Couples the redox reaction to proton translocation (for every two electrons transferred, four hydrogen ions are translocated across the cytoplasmic membrane), and thus conserves the redox energy in a proton gradient. The polypeptide is NADH-quinone oxidoreductase subunit N (Escherichia coli (strain ATCC 8739 / DSM 1576 / NBRC 3972 / NCIMB 8545 / WDCM 00012 / Crooks)).